Reading from the N-terminus, the 269-residue chain is MSQQNGNVNRVGAQDRVGASGGMEHSFGFKAVDENEKQGLVNDVFHKVAKRYDIMNDLMSAGMHRVWKDAMVAWLAPSKRPGWTSLDVAGGTGDIAFRIVEASGRQAHVTILDINGSMLGVGRERAIKKGLIDNLEFVEANAEELPFEDNSFDAYTIAFGIRNVPHIDKALSEAYCVLKPGGRFLCLEFSEVELPVLDKVYDEWSFRAIPRIGKMITGDADSYSYLVESIRKFPKQQDFAAMIEKAGFERVSYRNFTGGIAALHSGWKL.

Residues T92, D113, and 141-142 (NA) each bind S-adenosyl-L-methionine.

Belongs to the class I-like SAM-binding methyltransferase superfamily. MenG/UbiE family.

The enzyme catalyses a 2-demethylmenaquinol + S-adenosyl-L-methionine = a menaquinol + S-adenosyl-L-homocysteine + H(+). It carries out the reaction a 2-methoxy-6-(all-trans-polyprenyl)benzene-1,4-diol + S-adenosyl-L-methionine = a 5-methoxy-2-methyl-3-(all-trans-polyprenyl)benzene-1,4-diol + S-adenosyl-L-homocysteine + H(+). It functions in the pathway quinol/quinone metabolism; menaquinone biosynthesis; menaquinol from 1,4-dihydroxy-2-naphthoate: step 2/2. The protein operates within cofactor biosynthesis; ubiquinone biosynthesis. In terms of biological role, methyltransferase required for the conversion of demethylmenaquinol (DMKH2) to menaquinol (MKH2) and the conversion of 2-polyprenyl-6-methoxy-1,4-benzoquinol (DDMQH2) to 2-polyprenyl-3-methyl-6-methoxy-1,4-benzoquinol (DMQH2). This chain is Ubiquinone/menaquinone biosynthesis C-methyltransferase UbiE, found in Brucella suis (strain ATCC 23445 / NCTC 10510).